A 182-amino-acid polypeptide reads, in one-letter code: NADH-quinone oxidoreductase subunit I (182 aa).

4Fe-4S ferredoxin-type domains are found at residues 52 to 82 (LTRD…LQKA) and 92 to 121 (DFFR…LTPD). [4Fe-4S] cluster contacts are provided by cysteine 62, cysteine 65, cysteine 68, cysteine 72, cysteine 101, cysteine 104, cysteine 107, and cysteine 111.

The protein belongs to the complex I 23 kDa subunit family. NDH-1 is composed of 13 different subunits. Subunits NuoA, H, J, K, L, M, N constitute the membrane sector of the complex. It depends on [4Fe-4S] cluster as a cofactor.

The protein resides in the cell inner membrane. The enzyme catalyses a quinone + NADH + 5 H(+)(in) = a quinol + NAD(+) + 4 H(+)(out). NDH-1 shuttles electrons from NADH, via FMN and iron-sulfur (Fe-S) centers, to quinones in the respiratory chain. The immediate electron acceptor for the enzyme in this species is believed to be ubiquinone. Couples the redox reaction to proton translocation (for every two electrons transferred, four hydrogen ions are translocated across the cytoplasmic membrane), and thus conserves the redox energy in a proton gradient. The sequence is that of NADH-quinone oxidoreductase subunit I from Pseudomonas syringae pv. syringae (strain B728a).